The following is a 403-amino-acid chain: Rhomboid-like protein 15 (403 aa).

A run of 5 helical transmembrane segments spans residues 22 to 42 (IPFL…ICLL), 70 to 90 (AIIF…LVPM), 103 to 123 (LLYL…LIAS), 141 to 161 (AIGF…LSGV), and 176 to 196 (LYPW…SLLG). The active-site Nucleophile is the Ser145. His197 serves as the catalytic Charge relay system. The helical transmembrane segment at 198 to 218 (LCGILSGFSYSYGLFNFLMPG) threads the bilayer. Residues 282–316 (EASNQSSEDSRFPGRGRTLSTARDPTAPAGETDPN) are disordered. One can recognise a UBA domain in the interval 361–401 (AASEEQIQKLVAMGFDRTQVEVALAAADDDLTVAVEILMSQ).

It belongs to the peptidase S54 family.

The protein localises to the membrane. Functionally, probable rhomboid-type serine protease that catalyzes intramembrane proteolysis. May function in senescence. The polypeptide is Rhomboid-like protein 15 (Arabidopsis thaliana (Mouse-ear cress)).